The chain runs to 344 residues: Probable Delta(7)-sterol 5(6)-desaturase (344 aa).

A run of 3 helical transmembrane segments spans residues 76-96 (LSLFLILWLFGLVTYYVFASL), 123-143 (QTNAALPVMAFFTFPFLVAEV), and 160-180 (WYDFFQFPLFIMFTDFGIYWI). The Fatty acid hydroxylase domain maps to 167 to 292 (PLFIMFTDFG…FTTLWDRLGG (126 aa)). Positions 181-185 (HRGLH) match the Histidine box-1 motif. The Histidine box-2 signature appears at 194–198 (HKPHH). The chain crosses the membrane as a helical span at residues 224–244 (HIFPFIFPLQKMAYVGLFVFI). A Histidine box-3 motif is present at residues 269 to 273 (HSVHH).

This sequence belongs to the sterol desaturase family. Fe cation serves as cofactor.

The protein resides in the endoplasmic reticulum membrane. The catalysed reaction is a Delta(7)-sterol + 2 Fe(II)-[cytochrome b5] + O2 + 2 H(+) = a Delta(5),Delta(7)-sterol + 2 Fe(III)-[cytochrome b5] + 2 H2O. It functions in the pathway steroid metabolism; ergosterol biosynthesis; ergosterol from zymosterol: step 3/5. Functionally, catalyzes the introduction of a C-5 double bond in the B ring of ergosterol. May contribute to the regulation of ergosterol biosynthesis. In Neurospora crassa (strain ATCC 24698 / 74-OR23-1A / CBS 708.71 / DSM 1257 / FGSC 987), this protein is Probable Delta(7)-sterol 5(6)-desaturase.